The sequence spans 463 residues: Soluble pyridine nucleotide transhydrogenase (463 aa).

35–44 (EDKPTVGGNC) serves as a coordination point for FAD.

The protein belongs to the class-I pyridine nucleotide-disulfide oxidoreductase family. Requires FAD as cofactor.

The protein resides in the cytoplasm. The catalysed reaction is NAD(+) + NADPH = NADH + NADP(+). In terms of biological role, conversion of NADPH, generated by peripheral catabolic pathways, to NADH, which can enter the respiratory chain for energy generation. The chain is Soluble pyridine nucleotide transhydrogenase from Marinobacter nauticus (strain ATCC 700491 / DSM 11845 / VT8) (Marinobacter aquaeolei).